Reading from the N-terminus, the 379-residue chain is Dual-specificity RNA methyltransferase RlmN (379 aa).

Glu-97 functions as the Proton acceptor in the catalytic mechanism. The Radical SAM core domain occupies 103–343; sequence QGGRGTLCVS…VRTTRGDDID (241 aa). The cysteines at positions 110 and 346 are disulfide-linked. Residues Cys-117, Cys-121, and Cys-124 each contribute to the [4Fe-4S] cluster site. S-adenosyl-L-methionine is bound by residues 171–172, Ser-203, 225–227, and Asn-303; these read GE and SLH. The S-methylcysteine intermediate role is filled by Cys-346.

The protein belongs to the radical SAM superfamily. RlmN family. The cofactor is [4Fe-4S] cluster.

The protein localises to the cytoplasm. The enzyme catalyses adenosine(2503) in 23S rRNA + 2 reduced [2Fe-2S]-[ferredoxin] + 2 S-adenosyl-L-methionine = 2-methyladenosine(2503) in 23S rRNA + 5'-deoxyadenosine + L-methionine + 2 oxidized [2Fe-2S]-[ferredoxin] + S-adenosyl-L-homocysteine. It catalyses the reaction adenosine(37) in tRNA + 2 reduced [2Fe-2S]-[ferredoxin] + 2 S-adenosyl-L-methionine = 2-methyladenosine(37) in tRNA + 5'-deoxyadenosine + L-methionine + 2 oxidized [2Fe-2S]-[ferredoxin] + S-adenosyl-L-homocysteine. Specifically methylates position 2 of adenine 2503 in 23S rRNA and position 2 of adenine 37 in tRNAs. m2A2503 modification seems to play a crucial role in the proofreading step occurring at the peptidyl transferase center and thus would serve to optimize ribosomal fidelity. The protein is Dual-specificity RNA methyltransferase RlmN of Pseudomonas aeruginosa (strain ATCC 15692 / DSM 22644 / CIP 104116 / JCM 14847 / LMG 12228 / 1C / PRS 101 / PAO1).